Here is a 446-residue protein sequence, read N- to C-terminus: MSKKLYIKTYGCQMNVYDSVKMQDLLYPYGYEPTENIEEADVIILNTCHIREKAAEKTYSELGRIKKLQDARKKQGLNSAIIVVAGCVAQAEGEEIFTRTPYVDIVVGPQSYYNLPELISKVVRHEKHLIDLDFVEEAKFDQLPEQLYPQGASSFISVQEGCDKFCTFCVVPYTRGAEFSRNVEQVYREALKVVSSGAKEIMLLGQNVNAYHGKTSDDKVFTLADLIRHLVKIPNLERLRYTTSHPIDMTDDLISLHGLEPKLMPFLHLPVQSGSNKTLKAMNRKHDRDYYFDIIDRLRKARADIVLSSDFIVGFPGETDEDFADTLDLVRKVKYGQCYSFKYSPRPGTPGATRTDQVPEHIKSERLTILQKELAAQQLAFNESCIGSTMKVLFDRDGKFDDQIIGKTPYMQSVYIKNPNKDLLGKIIEVKITKAALNSLSGEIYR.

The 122-residue stretch at 3–124 (KKLYIKTYGC…LPELISKVVR (122 aa)) folds into the MTTase N-terminal domain. 6 residues coordinate [4Fe-4S] cluster: cysteine 12, cysteine 48, cysteine 87, cysteine 162, cysteine 166, and cysteine 169. In terms of domain architecture, Radical SAM core spans 148–380 (YPQGASSFIS…QKELAAQQLA (233 aa)). A TRAM domain is found at 383–446 (ESCIGSTMKV…LNSLSGEIYR (64 aa)).

This sequence belongs to the methylthiotransferase family. MiaB subfamily. As to quaternary structure, monomer. The cofactor is [4Fe-4S] cluster.

It is found in the cytoplasm. It catalyses the reaction N(6)-dimethylallyladenosine(37) in tRNA + (sulfur carrier)-SH + AH2 + 2 S-adenosyl-L-methionine = 2-methylsulfanyl-N(6)-dimethylallyladenosine(37) in tRNA + (sulfur carrier)-H + 5'-deoxyadenosine + L-methionine + A + S-adenosyl-L-homocysteine + 2 H(+). Its function is as follows. Catalyzes the methylthiolation of N6-(dimethylallyl)adenosine (i(6)A), leading to the formation of 2-methylthio-N6-(dimethylallyl)adenosine (ms(2)i(6)A) at position 37 in tRNAs that read codons beginning with uridine. The chain is tRNA-2-methylthio-N(6)-dimethylallyladenosine synthase from Rickettsia bellii (strain OSU 85-389).